The primary structure comprises 812 residues: Probable beta-glucosidase D (812 aa).

The N-terminal stretch at 1–18 (MRVPSLSVLSFLLGTALA) is a signal peptide. N53 and N188 each carry an N-linked (GlcNAc...) asparagine glycan. A disordered region spans residues 186–248 (ETNRTGGMGG…GMGGGMAGSS (63 aa)). The span at 191-207 (GGMGGGGGAPGGGGMGR) shows a compositional bias: gly residues. A compositionally biased stretch (polar residues) spans 211 to 225 (FSSSVPGGMSPTSSA). Positions 236-245 (GGSGMGGGMA) are enriched in gly residues. N-linked (GlcNAc...) asparagine glycosylation occurs at N296. The active site involves D324. N360, N384, N422, N501, N592, and N646 each carry an N-linked (GlcNAc...) asparagine glycan.

This sequence belongs to the glycosyl hydrolase 3 family.

Its subcellular location is the secreted. The catalysed reaction is Hydrolysis of terminal, non-reducing beta-D-glucosyl residues with release of beta-D-glucose.. Its pathway is glycan metabolism; cellulose degradation. Functionally, beta-glucosidases are one of a number of cellulolytic enzymes involved in the degradation of cellulosic biomass. Catalyzes the last step releasing glucose from the inhibitory cellobiose. This Emericella nidulans (strain FGSC A4 / ATCC 38163 / CBS 112.46 / NRRL 194 / M139) (Aspergillus nidulans) protein is Probable beta-glucosidase D (bglD).